Reading from the N-terminus, the 164-residue chain is MIILGIDPGIAILGYGIVKYEGNKFKVIDYGAIKTSSKMATPQRLKEIYLRLDELISEYQPDAVAIEELFFNTNTTTAMVVSHARGVAVLAAAIHEKEIYEYTPLQVKQAVVGYGRAEKKQVQQMIKILLNLEQAPKPDDVADALAVAVCHAHSGHFQSLFKVK.

Active-site residues include aspartate 7, glutamate 67, and aspartate 140. Residues aspartate 7, glutamate 67, and aspartate 140 each coordinate Mg(2+).

The protein belongs to the RuvC family. As to quaternary structure, homodimer which binds Holliday junction (HJ) DNA. The HJ becomes 2-fold symmetrical on binding to RuvC with unstacked arms; it has a different conformation from HJ DNA in complex with RuvA. In the full resolvosome a probable DNA-RuvA(4)-RuvB(12)-RuvC(2) complex forms which resolves the HJ. Mg(2+) is required as a cofactor.

The protein localises to the cytoplasm. The catalysed reaction is Endonucleolytic cleavage at a junction such as a reciprocal single-stranded crossover between two homologous DNA duplexes (Holliday junction).. The RuvA-RuvB-RuvC complex processes Holliday junction (HJ) DNA during genetic recombination and DNA repair. Endonuclease that resolves HJ intermediates. Cleaves cruciform DNA by making single-stranded nicks across the HJ at symmetrical positions within the homologous arms, yielding a 5'-phosphate and a 3'-hydroxyl group; requires a central core of homology in the junction. The consensus cleavage sequence is 5'-(A/T)TT(C/G)-3'. Cleavage occurs on the 3'-side of the TT dinucleotide at the point of strand exchange. HJ branch migration catalyzed by RuvA-RuvB allows RuvC to scan DNA until it finds its consensus sequence, where it cleaves and resolves the cruciform DNA. This is Crossover junction endodeoxyribonuclease RuvC from Alkaliphilus metalliredigens (strain QYMF).